Reading from the N-terminus, the 61-residue chain is Large ribosomal subunit protein eL20 (61 aa).

The protein belongs to the eukaryotic ribosomal protein eL20 family. Part of the 50S ribosomal subunit. Binds 23S rRNA.

This chain is Large ribosomal subunit protein eL20, found in Methanosarcina mazei (strain ATCC BAA-159 / DSM 3647 / Goe1 / Go1 / JCM 11833 / OCM 88) (Methanosarcina frisia).